A 370-amino-acid polypeptide reads, in one-letter code: 3-dehydroquinate synthase (370 aa).

NAD(+) contacts are provided by residues 108-112 (GVIGD), 132-133 (TT), Lys145, and Lys154. Residues Glu187, His249, and His267 each coordinate Zn(2+).

It belongs to the sugar phosphate cyclases superfamily. Dehydroquinate synthase family. Co(2+) serves as cofactor. The cofactor is Zn(2+). NAD(+) is required as a cofactor.

The protein localises to the cytoplasm. It carries out the reaction 7-phospho-2-dehydro-3-deoxy-D-arabino-heptonate = 3-dehydroquinate + phosphate. It participates in metabolic intermediate biosynthesis; chorismate biosynthesis; chorismate from D-erythrose 4-phosphate and phosphoenolpyruvate: step 2/7. Catalyzes the conversion of 3-deoxy-D-arabino-heptulosonate 7-phosphate (DAHP) to dehydroquinate (DHQ). This Cereibacter sphaeroides (strain ATCC 17023 / DSM 158 / JCM 6121 / CCUG 31486 / LMG 2827 / NBRC 12203 / NCIMB 8253 / ATH 2.4.1.) (Rhodobacter sphaeroides) protein is 3-dehydroquinate synthase.